Consider the following 421-residue polypeptide: Mitochondrial distribution and morphology protein 10 (421 aa).

This sequence belongs to the MDM10 family. Component of the ER-mitochondria encounter structure (ERMES) or MDM complex, composed of MMM1, MDM10, MDM12 and MDM34. Associates with the mitochondrial outer membrane sorting assembly machinery SAM(core) complex.

It localises to the mitochondrion outer membrane. Component of the ERMES/MDM complex, which serves as a molecular tether to connect the endoplasmic reticulum and mitochondria. Components of this complex are involved in the control of mitochondrial shape and protein biogenesis and may function in phospholipid exchange. MDM10 is involved in the late assembly steps of the general translocase of the mitochondrial outer membrane (TOM complex). Functions in the TOM40-specific route of the assembly of outer membrane beta-barrel proteins, including the association of TOM40 with the receptor TOM22 and small TOM proteins. Can associate with the SAM(core) complex as well as the MDM12-MMM1 complex, both involved in late steps of the major beta-barrel assembly pathway, that is responsible for biogenesis of all outer membrane beta-barrel proteins. May act as a switch that shuttles between both complexes and channels precursor proteins into the TOM40-specific pathway. Plays a role in mitochondrial morphology and in the inheritance of mitochondria. This is Mitochondrial distribution and morphology protein 10 from Vanderwaltozyma polyspora (strain ATCC 22028 / DSM 70294 / BCRC 21397 / CBS 2163 / NBRC 10782 / NRRL Y-8283 / UCD 57-17) (Kluyveromyces polysporus).